The chain runs to 81 residues: ATP synthase subunit c, chloroplastic (81 aa).

Transmembrane regions (helical) follow at residues 3–23 (PLIS…ASIG) and 53–73 (LLLS…VALA).

Belongs to the ATPase C chain family. F-type ATPases have 2 components, F(1) - the catalytic core - and F(0) - the membrane proton channel. F(1) has five subunits: alpha(3), beta(3), gamma(1), delta(1), epsilon(1). F(0) has four main subunits: a(1), b(1), b'(1) and c(10-14). The alpha and beta chains form an alternating ring which encloses part of the gamma chain. F(1) is attached to F(0) by a central stalk formed by the gamma and epsilon chains, while a peripheral stalk is formed by the delta, b and b' chains.

The protein localises to the plastid. Its subcellular location is the chloroplast thylakoid membrane. Functionally, f(1)F(0) ATP synthase produces ATP from ADP in the presence of a proton or sodium gradient. F-type ATPases consist of two structural domains, F(1) containing the extramembraneous catalytic core and F(0) containing the membrane proton channel, linked together by a central stalk and a peripheral stalk. During catalysis, ATP synthesis in the catalytic domain of F(1) is coupled via a rotary mechanism of the central stalk subunits to proton translocation. In terms of biological role, key component of the F(0) channel; it plays a direct role in translocation across the membrane. A homomeric c-ring of between 10-14 subunits forms the central stalk rotor element with the F(1) delta and epsilon subunits. The chain is ATP synthase subunit c, chloroplastic from Angiopteris evecta (Mule's foot fern).